The primary structure comprises 532 residues: MISKNTSFCGFLILVLATCMSAQFVSNESIKLHDILKPSATHRLFDTLQYSVEEQYSDSHLSFDVSTIYNYSEKPISIGKLNKKYRDILFEGDMAISYKQLSMIVNGSTEYRKAIKSRRRGNKINGESTDRTKRQAYLDNNYPATIWKNGVAFMFHESLTPIAKTAILKAVHFWYRETCIEFHPRTFQKEYLLFIGNDDGCWSTVGRDASQGKQVVSIGNGCEHFGVTSHELAHALGIFHEQSRFDRDESVVFNPRVVERDLLFNFAKISPRQMSTYGLPYDIGSVMHYTPTEFSNIPSIPTLAAIDTNLQQTMGQLEGPSFVDVHIMNQHYQCQEKCPTQAPCQNGGFTNSRNCKVCKCPTGFGGAYCQLIASSFSPFCGGYLNAEETTRRFDITIRQSTTTRSKTCVYHIKAPEGKRIIIDILKIDSKCIEGCWQDGLELKMKKDFRPVGYRFCCPESSRRKVISEGNMVPFMVFSKEHDFSVSFEYSFVSTSAGFDDEKNDSDVIVDNLDGVFVSDTSLLQRIGFRRQL.

Positions 1 to 22 (MISKNTSFCGFLILVLATCMSA) are cleaved as a signal peptide. N-linked (GlcNAc...) asparagine glycans are attached at residues asparagine 5, asparagine 27, asparagine 70, and asparagine 106. Residues 23 to 134 (QFVSNESIKL…NGESTDRTKR (112 aa)) constitute a propeptide that is removed on maturation. The Peptidase M12A domain maps to 135–335 (QAYLDNNYPA…HIMNQHYQCQ (201 aa)). 6 cysteine pairs are disulfide-bonded: cysteine 179/cysteine 334, cysteine 201/cysteine 222, cysteine 338/cysteine 358, cysteine 360/cysteine 369, cysteine 380/cysteine 408, and cysteine 435/cysteine 456. A Zn(2+)-binding site is contributed by histidine 230. Glutamate 231 is an active-site residue. Histidine 234 and histidine 240 together coordinate Zn(2+). The 41-residue stretch at 330–370 (QHYQCQEKCPTQAPCQNGGFTNSRNCKVCKCPTGFGGAYCQ) folds into the EGF-like domain. One can recognise a CUB domain in the interval 380–494 (CGGYLNAEET…VSFEYSFVST (115 aa)). The N-linked (GlcNAc...) asparagine glycan is linked to asparagine 503.

Zn(2+) serves as cofactor.

The protein localises to the secreted. In terms of biological role, metalloprotease. The chain is Zinc metalloproteinase nas-29 (nas-29) from Caenorhabditis elegans.